The primary structure comprises 546 residues: Probable T-complex protein 1 subunit theta (546 aa).

Residues 527 to 546 form a disordered region; it reads MSKPAGGPKPPGPNPHWDDD.

This sequence belongs to the TCP-1 chaperonin family. Heterooligomeric complex of about 850 to 900 kDa that forms two stacked rings, 12 to 16 nm in diameter.

The protein localises to the cytoplasm. Molecular chaperone; assists the folding of proteins upon ATP hydrolysis. Known to play a role, in vitro, in the folding of actin and tubulin. This chain is Probable T-complex protein 1 subunit theta (cct8), found in Schizosaccharomyces pombe (strain 972 / ATCC 24843) (Fission yeast).